A 103-amino-acid chain; its full sequence is Large ribosomal subunit protein bL21 (103 aa).

The protein belongs to the bacterial ribosomal protein bL21 family. Part of the 50S ribosomal subunit. Contacts protein L20.

Functionally, this protein binds to 23S rRNA in the presence of protein L20. The chain is Large ribosomal subunit protein bL21 from Albidiferax ferrireducens (strain ATCC BAA-621 / DSM 15236 / T118) (Rhodoferax ferrireducens).